Here is a 132-residue protein sequence, read N- to C-terminus: Peptide methionine sulfoxide reductase MsrB (132 aa).

The MsrB domain occupies 8–130; it reads LDSWREELTE…NSASLKLVPR (123 aa). Cys47, Cys50, Cys96, and Cys99 together coordinate Zn(2+). Residue Cys119 is the Nucleophile of the active site.

The protein belongs to the MsrB Met sulfoxide reductase family. It depends on Zn(2+) as a cofactor.

It catalyses the reaction L-methionyl-[protein] + [thioredoxin]-disulfide + H2O = L-methionyl-(R)-S-oxide-[protein] + [thioredoxin]-dithiol. The polypeptide is Peptide methionine sulfoxide reductase MsrB (Pseudomonas paraeruginosa (strain DSM 24068 / PA7) (Pseudomonas aeruginosa (strain PA7))).